A 95-amino-acid polypeptide reads, in one-letter code: Large ribosomal subunit protein bL27 (95 aa).

Residues Met-1–Phe-12 constitute a propeptide that is removed on maturation. The segment at Gly-17 to Ser-37 is disordered.

This sequence belongs to the bacterial ribosomal protein bL27 family. Post-translationally, the N-terminus is cleaved by ribosomal processing cysteine protease Prp.

The polypeptide is Large ribosomal subunit protein bL27 (Malacoplasma penetrans (strain HF-2) (Mycoplasma penetrans)).